A 420-amino-acid polypeptide reads, in one-letter code: Pectate lyase (420 aa).

An N-terminal signal peptide occupies residues 1–21 (MKKVMLATALFLGLTPAGANA). Residues 117 to 139 (TWGKKEPSGTQEEARARSQKNQK) are disordered. Positions 119-132 (GKKEPSGTQEEARA) are enriched in basic and acidic residues. Residues Asp-205, Asp-244, and Asp-248 each coordinate Ca(2+). Arg-300 is an active-site residue.

The protein belongs to the polysaccharide lyase 1 family. Monomer. Ca(2+) serves as cofactor.

The protein resides in the secreted. It carries out the reaction Eliminative cleavage of (1-&gt;4)-alpha-D-galacturonan to give oligosaccharides with 4-deoxy-alpha-D-galact-4-enuronosyl groups at their non-reducing ends.. It participates in glycan metabolism; pectin degradation; 2-dehydro-3-deoxy-D-gluconate from pectin: step 2/5. Functionally, produces unsaturated products from polygalacturonate. The polypeptide is Pectate lyase (pel) (Bacillus subtilis (strain 168)).